Consider the following 242-residue polypeptide: Lectin-like protein At1g53060 (242 aa).

Residues Phe3–Glu237 form a legume-lectin like region. The residue at position 207 (Ser207) is a Phosphoserine.

The protein belongs to the leguminous lectin family.

This Arabidopsis thaliana (Mouse-ear cress) protein is Lectin-like protein At1g53060.